The sequence spans 349 residues: UPF0284 protein MM_0708 (349 aa).

This sequence belongs to the UPF0284 family.

This Methanosarcina mazei (strain ATCC BAA-159 / DSM 3647 / Goe1 / Go1 / JCM 11833 / OCM 88) (Methanosarcina frisia) protein is UPF0284 protein MM_0708.